The following is a 225-amino-acid chain: Thymidylate kinase (225 aa).

Residue 10–17 (GPEGAGKT) participates in ATP binding.

It belongs to the thymidylate kinase family.

It catalyses the reaction dTMP + ATP = dTDP + ADP. Functionally, phosphorylation of dTMP to form dTDP in both de novo and salvage pathways of dTTP synthesis. The protein is Thymidylate kinase of Geobacillus thermodenitrificans (strain NG80-2).